Reading from the N-terminus, the 204-residue chain is Holliday junction branch migration complex subunit RuvA (204 aa).

The segment at 1–63 is domain I; that stretch reads MIASLRGTVI…EDAMKLYGFI (63 aa). A domain II region spans residues 64–142; that stretch reads DDQSREMFAL…AYTVGVVDDG (79 aa). The interval 143–151 is flexible linker; the sequence is APTAPTQGV. Residues 152–204 are domain III; sequence APVVVVDQVTQALTGLGFTEKQADDAVAAVLSADPGLDTSAALRAALAKLGGK.

It belongs to the RuvA family. As to quaternary structure, homotetramer. Forms an RuvA(8)-RuvB(12)-Holliday junction (HJ) complex. HJ DNA is sandwiched between 2 RuvA tetramers; dsDNA enters through RuvA and exits via RuvB. An RuvB hexamer assembles on each DNA strand where it exits the tetramer. Each RuvB hexamer is contacted by two RuvA subunits (via domain III) on 2 adjacent RuvB subunits; this complex drives branch migration. In the full resolvosome a probable DNA-RuvA(4)-RuvB(12)-RuvC(2) complex forms which resolves the HJ.

The protein resides in the cytoplasm. The RuvA-RuvB-RuvC complex processes Holliday junction (HJ) DNA during genetic recombination and DNA repair, while the RuvA-RuvB complex plays an important role in the rescue of blocked DNA replication forks via replication fork reversal (RFR). RuvA specifically binds to HJ cruciform DNA, conferring on it an open structure. The RuvB hexamer acts as an ATP-dependent pump, pulling dsDNA into and through the RuvAB complex. HJ branch migration allows RuvC to scan DNA until it finds its consensus sequence, where it cleaves and resolves the cruciform DNA. This is Holliday junction branch migration complex subunit RuvA from Corynebacterium efficiens (strain DSM 44549 / YS-314 / AJ 12310 / JCM 11189 / NBRC 100395).